A 170-amino-acid chain; its full sequence is Shikimate kinase (170 aa).

11-16 (LSGKST) contacts ATP. Residue Ser15 participates in Mg(2+) binding. Residues Asp33, Arg57, and Gly79 each contribute to the substrate site. ATP is bound at residue Arg119. Arg137 is a substrate binding site.

This sequence belongs to the shikimate kinase family. As to quaternary structure, monomer. Mg(2+) is required as a cofactor.

Its subcellular location is the cytoplasm. The catalysed reaction is shikimate + ATP = 3-phosphoshikimate + ADP + H(+). It functions in the pathway metabolic intermediate biosynthesis; chorismate biosynthesis; chorismate from D-erythrose 4-phosphate and phosphoenolpyruvate: step 5/7. In terms of biological role, catalyzes the specific phosphorylation of the 3-hydroxyl group of shikimic acid using ATP as a cosubstrate. The sequence is that of Shikimate kinase from Clostridium botulinum (strain Langeland / NCTC 10281 / Type F).